A 133-amino-acid polypeptide reads, in one-letter code: Cytochrome c-type biogenesis protein CcmE (133 aa).

Residues 1–7 (MKRKHKR) lie on the Cytoplasmic side of the membrane. Residues 8–28 (LLFIIVTFIIFGSSVVIVLNK) traverse the membrane as a helical; Signal-anchor for type II membrane protein segment. Residues 29-133 (LRSNISFFFT…NYKPGKYRAK (105 aa)) lie on the Periplasmic side of the membrane. Residues His121 and Tyr125 each coordinate heme.

This sequence belongs to the CcmE/CycJ family.

The protein resides in the cell inner membrane. Its function is as follows. Heme chaperone required for the biogenesis of c-type cytochromes. Transiently binds heme delivered by CcmC and transfers the heme to apo-cytochromes in a process facilitated by CcmF and CcmH. This Ehrlichia canis (strain Jake) protein is Cytochrome c-type biogenesis protein CcmE.